Consider the following 428-residue polypeptide: Nocturnin (428 aa).

A mitochondrion-targeting transit peptide spans 1–72 (MYQSPRRLCS…PMGNGTSRLY (72 aa)). The disordered stretch occupies residues 21-66 (RRTLVPGPRRTLAPPVLGSRPASPQLQAAASGAARSRPRTVSPMGN). Positions 39–55 (SRPASPQLQAAASGAAR) are enriched in low complexity. Glu192 lines the Mg(2+) pocket. Substrate contacts are provided by residues Glu192, 216-218 (KPW), Asn260, 283-286 (HLKA), and 321-323 (DFN). Residues 340 to 350 (NLNSAYKLLSP) form an interaction with PPARG region. Substrate is bound at residue His411.

It belongs to the CCR4/nocturin family. As to quaternary structure, interacts with PPARG. Mg(2+) serves as cofactor.

Its subcellular location is the cytoplasm. The protein localises to the nucleus. The protein resides in the perinuclear region. It is found in the mitochondrion. It carries out the reaction NADP(+) + H2O = phosphate + NAD(+). The catalysed reaction is NADPH + H2O = phosphate + NADH. In terms of biological role, phosphatase which catalyzes the conversion of NADP(+) to NAD(+) and of NADPH to NADH. Shows a small preference for NADPH over NADP(+). Represses translation and promotes degradation of target mRNA molecules. Plays an important role in post-transcriptional regulation of metabolic genes under circadian control. Exerts a rhythmic post-transcriptional control of genes necessary for metabolic functions including nutrient absorption, glucose/insulin sensitivity, lipid metabolism, adipogenesis, inflammation and osteogenesis. Plays an important role in favoring adipogenesis over osteoblastogenesis and acts as a key regulator of the adipogenesis/osteogenesis balance. Promotes adipogenesis by facilitating PPARG nuclear translocation which activates its transcriptional activity. Regulates circadian expression of NOS2 in the liver and negatively regulates the circadian expression of IGF1 in the bone. Critical for proper development of early embryos. The sequence is that of Nocturnin from Rattus norvegicus (Rat).